The chain runs to 217 residues: Translation initiation factor 6 (217 aa).

The protein belongs to the eIF-6 family.

Binds to the 50S ribosomal subunit and prevents its association with the 30S ribosomal subunit to form the 70S initiation complex. The protein is Translation initiation factor 6 of Methanococcoides burtonii (strain DSM 6242 / NBRC 107633 / OCM 468 / ACE-M).